Reading from the N-terminus, the 381-residue chain is MAAGSASSLGGGAWPGSEAGDFLARYRQVSNKLKKRFLRKPNVAEAGEQFAQLARELRAQECLPYAAWCQLAVARCQQALFHGPGEALALTEAARLFLRQECDARQRLGCPAAYGEPLQAAASALGAAVRLHLELGQPAAAAALCLELAAALRAVGQPAAAAGHFQRAAQLHLPLMPLAALQALGDAASCQLLARDYTGALALFTRMQRLAREHGGHPVQQLELLPQPPSGPQPPLSGPQPRPVLGSTLPLPQPPDHAPGSVAPSPGTLGAFADVLVRCEVSRVLLLLLLQPPPAKLLPEHAQTLEKYSWEAFDGHGQDTSGQLPEELFLLLQSLVMAAQEKDTEGIKKLQVEMWPLLTAEQNHLLHLVLQETISPSGQGV.

N-acetylalanine is present on Ala-2. Residues Lys-34 to Arg-36 carry the Nuclear localization signal motif. Positions Gln-221–Ser-265 are disordered. Pro residues predominate over residues Pro-226–Arg-242.

As to quaternary structure, interacts with HTT (via C-terminus). Interacts with RAB5A. Found in a complex with F8A1/F8A2/F8A3, HTT and RAB5A; mediates the recruitment of HTT by RAB5A onto early endosomes. In terms of tissue distribution, produced abundantly in a wide variety of cell types.

It localises to the cytoplasm. Its subcellular location is the nucleus. It is found in the early endosome. The protein resides in the nuclear body. Its function is as follows. RAB5A effector molecule that is involved in vesicular trafficking of early endosomes. Mediates the recruitment of HTT by RAB5A onto early endosomes. The HTT-F8A1/F8A2/F8A3-RAB5A complex stimulates early endosomal interaction with actin filaments and inhibits interaction with microtubules, leading to the reduction of endosome motility. The chain is 40-kDa huntingtin-associated protein (F8a1) from Mus musculus (Mouse).